The chain runs to 635 residues: MQQESTLLDKIDYPADLRNIPLEKLPQVCKEVRNYIIDTLSGVGGHFASNLGVVELTVALHYVFDTPKDRLIWDVGHQTYPHKILTGRKDRLKTVRKFNGLSGFPKREESPYDLYNTGHAGTSISQALGEAAARDLTKGEDYSVVAIIGDASIATGMALEAMNHAGHLKKDMIVILNDNYMSISKNVGSISNYLNNIITSHFYNHWKRVFYTFLKWLPIVGPAAERFFKKVEKGFKDVLTPGGLFEDLGFGYIGPEDGHDVIRLVNMLAKVKKMKGPILLHLITQKGKGYDPAERDPIKYHGVTPFRKEDGAMDSGDTSKIAYSKIVGRMLSILTEANPKIAAITPAMIEGSGLKEYAEKYPDHLFDVGIAEQHSVAFAGAMTNGSIIPYMCIYSTFLTRAIDQLVQDVSLMNLPVRFVIDRAGCVGPDGETHQGLFDLGYLLGLPNMDVFVPSNGQDMIDSLRWMETYDKAPIAIRFPKANVDLKTLDFYKEVDLRPGTFRVLKRGTDLALLSIGSMIDEAKKATEILESAGFSVTLIDLIWLRPLGVEALNEELSNVRRFVIIDESYVDAGASGYLLNRILPENLSKYVKTFGFPPEPIHHGERKEIIQAYRLDGASIAESVADVLKKNLIKP.

Thiamine diphosphate is bound by residues His77 and Gly118 to Ala120. Asp150 contributes to the Mg(2+) binding site. Residues Ala151–Ser152, Asn179, Tyr290, and Glu372 each bind thiamine diphosphate. Asn179 contributes to the Mg(2+) binding site.

It belongs to the transketolase family. DXPS subfamily. Homodimer. The cofactor is Mg(2+). Requires thiamine diphosphate as cofactor.

It catalyses the reaction D-glyceraldehyde 3-phosphate + pyruvate + H(+) = 1-deoxy-D-xylulose 5-phosphate + CO2. Its pathway is metabolic intermediate biosynthesis; 1-deoxy-D-xylulose 5-phosphate biosynthesis; 1-deoxy-D-xylulose 5-phosphate from D-glyceraldehyde 3-phosphate and pyruvate: step 1/1. Its function is as follows. Catalyzes the acyloin condensation reaction between C atoms 2 and 3 of pyruvate and glyceraldehyde 3-phosphate to yield 1-deoxy-D-xylulose-5-phosphate (DXP). This chain is 1-deoxy-D-xylulose-5-phosphate synthase, found in Leptospira borgpetersenii serovar Hardjo-bovis (strain JB197).